Consider the following 180-residue polypeptide: ADP-ribosylation factor 1 (180 aa).

Gly-2 carries the N-myristoyl glycine lipid modification. GTP-binding positions include 24 to 31, 67 to 71, and 126 to 129; these read GLDAAGKT, DVGGQ, and NKQD.

Belongs to the small GTPase superfamily. Arf family.

It localises to the golgi apparatus. It carries out the reaction GTP + H2O = GDP + phosphate + H(+). Its function is as follows. GTP-binding protein involved in protein trafficking; may modulate vesicle budding and uncoating within the Golgi apparatus. The chain is ADP-ribosylation factor 1 (arf1) from Schizosaccharomyces pombe (strain 972 / ATCC 24843) (Fission yeast).